A 355-amino-acid polypeptide reads, in one-letter code: Protein-glutamate methylesterase/protein-glutamine glutaminase (355 aa).

Residues 4–121 (KVLIIDDSAL…ANGMHEYSEM (118 aa)) enclose the Response regulatory domain. Asp-55 bears the 4-aspartylphosphate mark. Positions 156–348 (LISSEKLIII…GRVLQYLAAN (193 aa)) constitute a CheB-type methylesterase domain. Active-site residues include Ser-168, His-194, and Asp-290.

Belongs to the CheB family. In terms of processing, phosphorylated by CheA. Phosphorylation of the N-terminal regulatory domain activates the methylesterase activity.

It localises to the cytoplasm. It carries out the reaction [protein]-L-glutamate 5-O-methyl ester + H2O = L-glutamyl-[protein] + methanol + H(+). It catalyses the reaction L-glutaminyl-[protein] + H2O = L-glutamyl-[protein] + NH4(+). Involved in chemotaxis. Part of a chemotaxis signal transduction system that modulates chemotaxis in response to various stimuli. Catalyzes the demethylation of specific methylglutamate residues introduced into the chemoreceptors (methyl-accepting chemotaxis proteins or MCP) by CheR. Also mediates the irreversible deamidation of specific glutamine residues to glutamic acid. This Methylobacillus flagellatus (strain ATCC 51484 / DSM 6875 / VKM B-1610 / KT) protein is Protein-glutamate methylesterase/protein-glutamine glutaminase.